The chain runs to 130 residues: Con-Ins G2 (130 aa).

An N-terminal signal peptide occupies residues 1 to 24; the sequence is MTTSSYFLLVALGLLLYVRQSFST. Disulfide bonds link cysteine 29–cysteine 100, cysteine 41–cysteine 103, cysteine 53–cysteine 116, and cysteine 102–cysteine 107. Proline 34 is subject to 4-hydroxyproline; partial. Residues 54–74 are disordered; sequence EEEEARRGGTNDGGKKRRRAS. Residues 59–92 constitute a propeptide, c peptide; sequence RRGGTNDGGKKRRRASPLWKRRRFLSMLKARAKR. Glutamate 111 bears the 4-carboxyglutamate; partial mark.

It belongs to the insulin family. Heterodimer of A and B chains; disulfide-linked. Expressed by the venom gland.

The protein localises to the secreted. Its function is as follows. This venom insulin, from a fish-hunting cone snail, facilitates prey capture by rapidly inducing hypoglycemic shock. Intraperitoneal injection of this peptide into zebrafish lowers blood glucose with the same potency than human insulin. In vivo, when applied to water, this peptide reduces overall locomotor activity of zebrafish larvae, observed as a significant decrease in the percentage of time spent swimming and movement frequency. The protein is Con-Ins G2 of Conus geographus (Geography cone).